The primary structure comprises 197 residues: dTTP/UTP pyrophosphatase (197 aa).

The active-site Proton acceptor is the aspartate 70.

The protein belongs to the Maf family. YhdE subfamily. A divalent metal cation is required as a cofactor.

The protein resides in the cytoplasm. It catalyses the reaction dTTP + H2O = dTMP + diphosphate + H(+). The enzyme catalyses UTP + H2O = UMP + diphosphate + H(+). Nucleoside triphosphate pyrophosphatase that hydrolyzes dTTP and UTP. May have a dual role in cell division arrest and in preventing the incorporation of modified nucleotides into cellular nucleic acids. In Shigella boydii serotype 4 (strain Sb227), this protein is dTTP/UTP pyrophosphatase (yceF2).